Here is a 482-residue protein sequence, read N- to C-terminus: tRNA sulfurtransferase (482 aa).

One can recognise a THUMP domain in the interval 61 to 165 (LAIRDALTRI…DDRLLLIKGR (105 aa)). ATP-binding positions include 183–184 (LI), Lys265, Gly287, and Gln296. A disulfide bond links Cys344 and Cys456. Residues 404 to 482 (FGPNDVILDI…GFNNVKVYRP (79 aa)) form the Rhodanese domain. Cys456 acts as the Cysteine persulfide intermediate in catalysis.

The protein belongs to the ThiI family.

The protein localises to the cytoplasm. It catalyses the reaction [ThiI sulfur-carrier protein]-S-sulfanyl-L-cysteine + a uridine in tRNA + 2 reduced [2Fe-2S]-[ferredoxin] + ATP + H(+) = [ThiI sulfur-carrier protein]-L-cysteine + a 4-thiouridine in tRNA + 2 oxidized [2Fe-2S]-[ferredoxin] + AMP + diphosphate. The enzyme catalyses [ThiS sulfur-carrier protein]-C-terminal Gly-Gly-AMP + S-sulfanyl-L-cysteinyl-[cysteine desulfurase] + AH2 = [ThiS sulfur-carrier protein]-C-terminal-Gly-aminoethanethioate + L-cysteinyl-[cysteine desulfurase] + A + AMP + 2 H(+). The protein operates within cofactor biosynthesis; thiamine diphosphate biosynthesis. Functionally, catalyzes the ATP-dependent transfer of a sulfur to tRNA to produce 4-thiouridine in position 8 of tRNAs, which functions as a near-UV photosensor. Also catalyzes the transfer of sulfur to the sulfur carrier protein ThiS, forming ThiS-thiocarboxylate. This is a step in the synthesis of thiazole, in the thiamine biosynthesis pathway. The sulfur is donated as persulfide by IscS. The protein is tRNA sulfurtransferase of Escherichia coli O139:H28 (strain E24377A / ETEC).